The primary structure comprises 424 residues: UDP-N-acetylglucosamine 1-carboxyvinyltransferase (424 aa).

Residue 22-23 (KN) coordinates phosphoenolpyruvate. Arginine 95 serves as a coordination point for UDP-N-acetyl-alpha-D-glucosamine. Cysteine 119 (proton donor) is an active-site residue. Cysteine 119 is subject to 2-(S-cysteinyl)pyruvic acid O-phosphothioketal. UDP-N-acetyl-alpha-D-glucosamine-binding positions include 124–128 (RPVDQ), aspartate 311, and isoleucine 333.

This sequence belongs to the EPSP synthase family. MurA subfamily.

It localises to the cytoplasm. The catalysed reaction is phosphoenolpyruvate + UDP-N-acetyl-alpha-D-glucosamine = UDP-N-acetyl-3-O-(1-carboxyvinyl)-alpha-D-glucosamine + phosphate. The protein operates within cell wall biogenesis; peptidoglycan biosynthesis. Cell wall formation. Adds enolpyruvyl to UDP-N-acetylglucosamine. This Polaromonas sp. (strain JS666 / ATCC BAA-500) protein is UDP-N-acetylglucosamine 1-carboxyvinyltransferase.